A 619-amino-acid polypeptide reads, in one-letter code: tRNA uridine 5-carboxymethylaminomethyl modification enzyme MnmG (619 aa).

FAD is bound by residues 14–19 (GAGHAG), Val126, and Ser181. Residue 273–287 (GPRYCPSIEDKIMRF) participates in NAD(+) binding. Gln370 is an FAD binding site.

The protein belongs to the MnmG family. In terms of assembly, homodimer. Heterotetramer of two MnmE and two MnmG subunits. FAD is required as a cofactor.

The protein resides in the cytoplasm. Its function is as follows. NAD-binding protein involved in the addition of a carboxymethylaminomethyl (cmnm) group at the wobble position (U34) of certain tRNAs, forming tRNA-cmnm(5)s(2)U34. The protein is tRNA uridine 5-carboxymethylaminomethyl modification enzyme MnmG of Syntrophotalea carbinolica (strain DSM 2380 / NBRC 103641 / GraBd1) (Pelobacter carbinolicus).